The chain runs to 396 residues: Methylthioribose kinase (396 aa).

Residues asparagine 44, lysine 61, and 115–117 (EDL) contribute to the ATP site. Position 233 (aspartate 233) interacts with substrate. 250–252 (DPE) lines the ATP pocket. Arginine 340 is a binding site for substrate.

This sequence belongs to the methylthioribose kinase family. As to quaternary structure, homodimer.

It catalyses the reaction 5-(methylsulfanyl)-D-ribose + ATP = 5-(methylsulfanyl)-alpha-D-ribose 1-phosphate + ADP + H(+). It functions in the pathway amino-acid biosynthesis; L-methionine biosynthesis via salvage pathway; S-methyl-5-thio-alpha-D-ribose 1-phosphate from S-methyl-5'-thioadenosine (hydrolase route): step 2/2. Functionally, catalyzes the phosphorylation of methylthioribose into methylthioribose-1-phosphate. The protein is Methylthioribose kinase of Geobacillus thermodenitrificans (strain NG80-2).